An 86-amino-acid polypeptide reads, in one-letter code: Haditoxin (86 aa).

The first 21 residues, 1–21 (MKTLLLTLVVVTIVYLDLGYT), serve as a signal peptide directing secretion. 4 disulfides stabilise this stretch: Cys-24–Cys-45, Cys-38–Cys-62, Cys-66–Cys-78, and Cys-79–Cys-84.

Belongs to the three-finger toxin family. Short-chain subfamily. Orphan group VIII (haditoxin) sub-subfamily. In terms of assembly, homodimer; non-covalently linked. As to expression, expressed by the venom gland.

Its subcellular location is the secreted. Its function is as follows. Antagonist of muscle (alpha-1-beta-1-delta-epsilon/CHRNA1-CHRNB1-CHRND-CHRNE) and neuronal (alpha-7/CHRNA7, alpha-3-beta-2/CHRNA3-CHRNB2, alpha-4-beta-2/CHRNA4-CHRNB2) nicotinic acetylcholine receptors (nAChR). The highest affinity is for human alpha-7/CHRNA7 nAChRs (IC(50)=180 nM), compared to human alpha-1-beta-1-delta-epsilon/CHRNA1-CHRNB1-CHRND-CHRNE nAChR (IC(50)= 550 nM), alpha-3-beta-2/CHRNA3-CHRNB2 nAChR (IC(50)=500 nM), and alpha-4-beta-2/CHRNA4-CHRNB2 nAChR (IC(50)=2.6 uM). The chain is Haditoxin from Ophiophagus hannah (King cobra).